Consider the following 150-residue polypeptide: Transcriptional repressor NrdR (150 aa).

A zinc finger spans residues 3 to 34 (CPFCGYEDTFVIDTREIEDQRVIRRRRECPNC). In terms of domain architecture, ATP-cone spans 49–139 (IMVIKKDGRR…VYQEFSSLEE (91 aa)).

The protein belongs to the NrdR family. It depends on Zn(2+) as a cofactor.

Negatively regulates transcription of bacterial ribonucleotide reductase nrd genes and operons by binding to NrdR-boxes. This Dictyoglomus thermophilum (strain ATCC 35947 / DSM 3960 / H-6-12) protein is Transcriptional repressor NrdR.